Here is a 426-residue protein sequence, read N- to C-terminus: Amino acid transporter AVT1H (426 aa).

Transmembrane regions (helical) follow at residues 34–54, 55–75, 110–130, 148–168, 182–202, 215–235, 248–268, 292–312, 340–360, 363–383, and 392–412; these read SFLH…QLSM, PYAV…FGIL, LIVC…YTIS, HFPA…SLWI, ILMS…GGVI, IPTV…FPNL, VSIV…ITGA, IALW…FAPL, LLLV…VLSL, SLVS…KICW, and AANL…SFES.

Belongs to the amino acid/polyamine transporter 2 family. Amino acid/auxin permease (AAAP) (TC 2.A.18.5) subfamily.

Its subcellular location is the membrane. The chain is Amino acid transporter AVT1H from Arabidopsis thaliana (Mouse-ear cress).